The following is a 209-amino-acid chain: Outer-membrane lipoprotein carrier protein (209 aa).

Positions 1-21 (MHRQLRYAVLATALFASTAFA) are cleaved as a signal peptide.

This sequence belongs to the LolA family. As to quaternary structure, monomer.

It is found in the periplasm. Participates in the translocation of lipoproteins from the inner membrane to the outer membrane. Only forms a complex with a lipoprotein if the residue after the N-terminal Cys is not an aspartate (The Asp acts as a targeting signal to indicate that the lipoprotein should stay in the inner membrane). This chain is Outer-membrane lipoprotein carrier protein, found in Xanthomonas axonopodis pv. citri (strain 306).